The chain runs to 248 residues: Small ribosomal subunit protein eS1 (248 aa).

Residues 1–21 (MAVGKDKRISKGKKGGKKKIV) are disordered.

Belongs to the eukaryotic ribosomal protein eS1 family. Component of the small ribosomal subunit. Mature ribosomes consist of a small (40S) and a large (60S) subunit. The 40S subunit contains about 33 different proteins and 1 molecule of RNA (18S). The 60S subunit contains about 49 different proteins and 3 molecules of RNA (25S, 5.8S and 5S).

It localises to the cytoplasm. This Syntrichia ruralis (Great hairy screw-moss) protein is Small ribosomal subunit protein eS1.